The chain runs to 219 residues: Octanoyltransferase (219 aa).

One can recognise a BPL/LPL catalytic domain in the interval 32-207; it reads ASSPDQLWIV…TFSHNLGYQN (176 aa). Substrate contacts are provided by residues 71 to 78, 138 to 140, and 151 to 153; these read RGGQVTYH, SLG, and GLA. Catalysis depends on Cys-169, which acts as the Acyl-thioester intermediate.

It belongs to the LipB family.

The protein resides in the cytoplasm. The catalysed reaction is octanoyl-[ACP] + L-lysyl-[protein] = N(6)-octanoyl-L-lysyl-[protein] + holo-[ACP] + H(+). It participates in protein modification; protein lipoylation via endogenous pathway; protein N(6)-(lipoyl)lysine from octanoyl-[acyl-carrier-protein]: step 1/2. Catalyzes the transfer of endogenously produced octanoic acid from octanoyl-acyl-carrier-protein onto the lipoyl domains of lipoate-dependent enzymes. Lipoyl-ACP can also act as a substrate although octanoyl-ACP is likely to be the physiological substrate. This chain is Octanoyltransferase, found in Shewanella sediminis (strain HAW-EB3).